A 161-amino-acid chain; its full sequence is Interleukin-17F (161 aa).

An N-terminal signal peptide occupies residues 1 to 28 (MKCTRETAMVKSLLLLMLGLAILREVAA). A glycan (N-linked (GlcNAc...) asparagine) is linked at Asn83. 2 cysteine pairs are disulfide-bonded: Cys100/Cys150 and Cys105/Cys152.

This sequence belongs to the IL-17 family. As to quaternary structure, homodimer; disulfide-linked. Heterodimer with IL17A (IL17A-IL17F). Forms complexes with IL17RA and IL17RC receptors with 2:1 binding stoichiometry: two receptor chains for one interleukin molecule. IL17F homodimer forms predominantly complexes with IL17RC homodimer, whereas IL17A-IL17F favors complexes with IL17RA-IL17RC. IL17RA and IL17RC chains cannot distinguish between IL17A and IL17F molecules, potentially enabling the formation of topologically distinct complexes. In terms of tissue distribution, expressed by T-helper 17 cells (Th17) (at protein level). The expression pattern reflects the differentiation state. In fully differentiated Th17 cells, IL17A-IL17F heterodimers are produced at higher levels than IL17A-IL17A and IL17F-IL17F dimers. Dominantly secreted in intestine. Expressed by resident cells of the lamina propria, both epithelial cells and immune cell subsets including natural killer cells, dendritic cells, macrophages and various T and B cell subsets. Expressed by epithelial cells and innate immune cells in the colon. Expressed in group 3 innate lymphoid cells.

Its subcellular location is the secreted. Effector cytokine of innate and adaptive immune system involved in antimicrobial host defense and maintenance of tissue integrity. IL17A-IL17F signals via IL17RA-IL17RC heterodimeric receptor complex, triggering homotypic interaction of IL17RA and IL17RC chains with TRAF3IP2 adapter through SEFIR domains. This leads to downstream TRAF6-mediated activation of NF-kappa-B and MAPkinase pathways ultimately resulting in transcriptional activation of cytokines, chemokines, antimicrobial peptides and matrix metalloproteinases, with potential strong immune inflammation. IL17A-IL17F is primarily involved in host defense against extracellular bacteria and fungi by inducing neutrophilic inflammation. As signature effector cytokine of T-helper 17 cells (Th17), primarily induces neutrophil activation and recruitment at infection and inflammatory sites. Stimulates the production of antimicrobial beta-defensins DEFB1, DEFB103A, and DEFB104A by mucosal epithelial cells, limiting the entry of microbes through the epithelial barriers. IL17F homodimer can signal via IL17RC homodimeric receptor complex, triggering downstream activation of TRAF6 and NF-kappa-B signaling pathway. Via IL17RC induces transcriptional activation of IL33, a potent cytokine that stimulates group 2 innate lymphoid cells and adaptive T-helper 2 cells involved in pulmonary allergic response to fungi. Likely via IL17RC, promotes sympathetic innervation of peripheral organs by coordinating the communication between gamma-delta T cells and parenchymal cells. Stimulates sympathetic innervation of thermogenic adipose tissue by driving TGFB1 expression. Regulates the composition of intestinal microbiota and immune tolerance by inducing antimicrobial proteins that specifically control the growth of commensal Firmicutes and Bacteroidetes. In Mus musculus (Mouse), this protein is Interleukin-17F (Il17f).